The sequence spans 108 residues: Large ribosomal subunit protein uL24 (108 aa).

Belongs to the universal ribosomal protein uL24 family. Part of the 50S ribosomal subunit.

In terms of biological role, one of two assembly initiator proteins, it binds directly to the 5'-end of the 23S rRNA, where it nucleates assembly of the 50S subunit. One of the proteins that surrounds the polypeptide exit tunnel on the outside of the subunit. This chain is Large ribosomal subunit protein uL24, found in Salinispora tropica (strain ATCC BAA-916 / DSM 44818 / JCM 13857 / NBRC 105044 / CNB-440).